A 61-amino-acid chain; its full sequence is MAKKSMIAKQQRTPKFAVRAYTRCSVCGRPHSVYRDFGLCRVCLRKMANEGLLPGVRKASW.

Residues Cys-24, Cys-27, Cys-40, and Cys-43 each contribute to the Zn(2+) site.

The protein belongs to the universal ribosomal protein uS14 family. Zinc-binding uS14 subfamily. In terms of assembly, part of the 30S ribosomal subunit. Contacts proteins S3 and S10. The cofactor is Zn(2+).

Binds 16S rRNA, required for the assembly of 30S particles and may also be responsible for determining the conformation of the 16S rRNA at the A site. This chain is Small ribosomal subunit protein uS14, found in Aliarcobacter butzleri (strain RM4018) (Arcobacter butzleri).